The primary structure comprises 127 residues: Small ribosomal subunit protein uS12m (127 aa).

It belongs to the universal ribosomal protein uS12 family.

The protein localises to the mitochondrion. The sequence is that of Small ribosomal subunit protein uS12m (RPS12) from Acanthamoeba castellanii (Amoeba).